The sequence spans 323 residues: Pectate lyase A (323 aa).

The signal sequence occupies residues Met1–Arg31. The N-linked (GlcNAc...) asparagine glycan is linked to Asn95. Residues Asp136, Asp165, and Asp169 each coordinate Ca(2+). Arg222 is a catalytic residue.

It belongs to the polysaccharide lyase 1 family. Ca(2+) is required as a cofactor.

The protein resides in the secreted. The enzyme catalyses Eliminative cleavage of (1-&gt;4)-alpha-D-galacturonan to give oligosaccharides with 4-deoxy-alpha-D-galact-4-enuronosyl groups at their non-reducing ends.. In terms of biological role, pectinolytic enzyme consist of four classes of enzymes: pectin lyase, polygalacturonase, pectin methylesterase and rhamnogalacturonase. Among pectinolytic enzymes, pectin lyase is the most important in depolymerization of pectin, since it cleaves internal glycosidic bonds of highly methylated pectins. Favors pectate, the anion, over pectin, the methyl ester. The sequence is that of Pectate lyase A (plyA) from Aspergillus niger.